The following is a 164-amino-acid chain: Endoribonuclease YbeY (164 aa).

Positions 120, 124, and 130 each coordinate Zn(2+).

Belongs to the endoribonuclease YbeY family. Zn(2+) is required as a cofactor.

The protein localises to the cytoplasm. Its function is as follows. Single strand-specific metallo-endoribonuclease involved in late-stage 70S ribosome quality control and in maturation of the 3' terminus of the 16S rRNA. This Acidothermus cellulolyticus (strain ATCC 43068 / DSM 8971 / 11B) protein is Endoribonuclease YbeY.